Reading from the N-terminus, the 183-residue chain is uncharacterized protein (183 aa).

A disordered region spans residues 136-183 (EPPASVPSKQSGRSDKKKSTRKSPTFRNRPDFRKNKGRQLNKTTKQKK). The span at 170–183 (NKGRQLNKTTKQKK) shows a compositional bias: basic residues.

This is an uncharacterized protein from Homo sapiens (Human).